We begin with the raw amino-acid sequence, 88 residues long: Sec-independent protein translocase protein TatA (88 aa).

A helical membrane pass occupies residues Ile3–Gly23. A compositionally biased stretch (basic and acidic residues) spans Met56–Lys66. A disordered region spans residues Met56–Asn88. The segment covering Ser67 to Ile76 has biased composition (polar residues). Basic and acidic residues predominate over residues Asn77–Asn88.

Belongs to the TatA/E family. As to quaternary structure, forms a complex with TatC.

Its subcellular location is the cell inner membrane. Its function is as follows. Part of the twin-arginine translocation (Tat) system that transports large folded proteins containing a characteristic twin-arginine motif in their signal peptide across membranes. TatA could form the protein-conducting channel of the Tat system. This is Sec-independent protein translocase protein TatA from Prochlorococcus marinus (strain MIT 9301).